Here is a 114-residue protein sequence, read N- to C-terminus: UPF0342 protein LSEI_1724 (114 aa).

It belongs to the UPF0342 family.

The polypeptide is UPF0342 protein LSEI_1724 (Lacticaseibacillus paracasei (strain ATCC 334 / BCRC 17002 / CCUG 31169 / CIP 107868 / KCTC 3260 / NRRL B-441) (Lactobacillus paracasei)).